A 333-amino-acid polypeptide reads, in one-letter code: MSLDIDQIALHQLVKRDEQTLDVVLRDSLLPANAVVEEMMAELHRVYSAKSKAYGLFNEQSELADALKRSRKGDEDFLSFSRAATGRLRDELAKYPFAEGGVVLFCQYRYLAVEYLLISVLSSCNSMRVNEQLDLSTTHYLDINRADIVARIDLTEWENNPESTRYLTFLKGRVGRKVSDFFMDFLAASEGLDTKAQNRGLLQAVADYCADAELGKNERQAYRQQVYSYCNEQLQAGEEIALQELAQELPKLGEKDFQQFSVEQGYALEESFPADRGTLRQLTKFAGSGGGLSINFDALLLGERIFWDAATDTLTIKGTPPNLRDQLQRNSGK.

It belongs to the YejK family.

Its subcellular location is the cytoplasm. It is found in the nucleoid. The protein is Nucleoid-associated protein YE1421 of Yersinia enterocolitica serotype O:8 / biotype 1B (strain NCTC 13174 / 8081).